The sequence spans 565 residues: Periplasmic trehalase (565 aa).

Residues 1-30 form the signal peptide; the sequence is MKSPAPSRPQKMALIPACIFLCFAALSVQA. Substrate-binding positions include arginine 152, 159–160, asparagine 196, 205–207, 277–279, and glycine 310; these read WD, RSQ, and RPE. Residues aspartate 312 and glutamate 496 each act as proton donor/acceptor in the active site. A substrate-binding site is contributed by glutamate 511. The segment at 538-565 is disordered; it reads PCDNVPATRPTVKSATTQPSTKEAQPTP. Polar residues predominate over residues 548–565; sequence TVKSATTQPSTKEAQPTP.

Belongs to the glycosyl hydrolase 37 family. As to quaternary structure, monomer.

The protein resides in the periplasm. It carries out the reaction alpha,alpha-trehalose + H2O = alpha-D-glucose + beta-D-glucose. In terms of biological role, provides the cells with the ability to utilize trehalose at high osmolarity by splitting it into glucose molecules that can subsequently be taken up by the phosphotransferase-mediated uptake system. The sequence is that of Periplasmic trehalase from Escherichia coli O8 (strain IAI1).